A 104-amino-acid polypeptide reads, in one-letter code: Nucleoid-associated protein EF_2780 (104 aa).

This sequence belongs to the YbaB/EbfC family. As to quaternary structure, homodimer.

Its subcellular location is the cytoplasm. It is found in the nucleoid. Binds to DNA and alters its conformation. May be involved in regulation of gene expression, nucleoid organization and DNA protection. This chain is Nucleoid-associated protein EF_2780, found in Enterococcus faecalis (strain ATCC 700802 / V583).